A 310-amino-acid chain; its full sequence is Aspartate carbamoyltransferase catalytic subunit (310 aa).

Residues arginine 58 and threonine 59 each contribute to the carbamoyl phosphate site. Lysine 86 is a binding site for L-aspartate. Carbamoyl phosphate is bound by residues arginine 108, histidine 137, and glutamine 140. L-aspartate is bound by residues arginine 170 and arginine 225. Carbamoyl phosphate is bound by residues glycine 264 and proline 265.

This sequence belongs to the aspartate/ornithine carbamoyltransferase superfamily. ATCase family. Heterododecamer (2C3:3R2) of six catalytic PyrB chains organized as two trimers (C3), and six regulatory PyrI chains organized as three dimers (R2).

The catalysed reaction is carbamoyl phosphate + L-aspartate = N-carbamoyl-L-aspartate + phosphate + H(+). It participates in pyrimidine metabolism; UMP biosynthesis via de novo pathway; (S)-dihydroorotate from bicarbonate: step 2/3. Catalyzes the condensation of carbamoyl phosphate and aspartate to form carbamoyl aspartate and inorganic phosphate, the committed step in the de novo pyrimidine nucleotide biosynthesis pathway. This Coxiella burnetii (strain CbuK_Q154) (Coxiella burnetii (strain Q154)) protein is Aspartate carbamoyltransferase catalytic subunit.